A 193-amino-acid polypeptide reads, in one-letter code: Thymidine kinase (193 aa).

Residues 16-23 and 89-92 contribute to the ATP site; these read GPMFSGKS and DEIQ. The active-site Proton acceptor is glutamate 90. Zn(2+)-binding residues include cysteine 146, cysteine 149, cysteine 184, and cysteine 187.

The protein belongs to the thymidine kinase family. In terms of assembly, homotetramer.

The protein localises to the cytoplasm. The enzyme catalyses thymidine + ATP = dTMP + ADP + H(+). This Thermoanaerobacter pseudethanolicus (strain ATCC 33223 / 39E) (Clostridium thermohydrosulfuricum) protein is Thymidine kinase.